The following is a 624-amino-acid chain: Glyco-Gag protein (624 aa).

The Cytoplasmic segment spans residues 1-63; that stretch reads LGDVPGTSGA…FLPSVWNRSR (63 aa). A helical transmembrane segment spans residues 64-86; sequence AARLVCCSIVLCCLCLAVFLYWS. At 87–624 the chain is on the extracellular side; the sequence is ENMGQTVTTP…PQTSLLALDD (538 aa). The N-linked (GlcNAc...) asparagine; by host glycan is linked to asparagine 113. 2 stretches are compositionally biased toward pro residues: residues 200–209 and 247–258; these read PSLLPEPPLS and DPPPYRDPGPPP. Disordered regions lie at residues 200 to 284 and 290 to 309; these read PSLL…ASRL and LPVADSTTSQAFPLRSGGNG. N-linked (GlcNAc...) asparagine; by host glycosylation is present at asparagine 478. Composition is skewed to basic and acidic residues over residues 520–552 and 572–605; these read RETPEEREERIKRETEEKEERRRAEDEQKEKER and KQDRQGGERRRPQLDKDQCAYCKEKGHWAKDCPK. Positions 520 to 624 are disordered; sequence RETPEEREER…PQTSLLALDD (105 aa).

In terms of processing, glycosylated by host. Post-translationally, cleaved by host near the middle of the molecule, releasing the c-terminal half containing capsid and nucleoprotein domains op GAG.

The protein localises to the host cell membrane. Functionally, plays a role in viral particle release. Presumably acts by facilitating the fission of the virion bud at the cell surface. May prevent the antiviral activity of murine APOBEC3. This Mus musculus (Mouse) protein is Glyco-Gag protein.